A 274-amino-acid chain; its full sequence is 2,3,4,5-tetrahydropyridine-2,6-dicarboxylate N-succinyltransferase (274 aa).

Positions 104 and 141 each coordinate substrate.

Belongs to the transferase hexapeptide repeat family. In terms of assembly, homotrimer.

It localises to the cytoplasm. It carries out the reaction (S)-2,3,4,5-tetrahydrodipicolinate + succinyl-CoA + H2O = (S)-2-succinylamino-6-oxoheptanedioate + CoA. It participates in amino-acid biosynthesis; L-lysine biosynthesis via DAP pathway; LL-2,6-diaminopimelate from (S)-tetrahydrodipicolinate (succinylase route): step 1/3. The protein is 2,3,4,5-tetrahydropyridine-2,6-dicarboxylate N-succinyltransferase of Shewanella sp. (strain ANA-3).